Here is a 436-residue protein sequence, read N- to C-terminus: GTPase Der (436 aa).

2 EngA-type G domains span residues 4–167 (PIVA…GEEE) and 176–351 (IRLS…ENHK). GTP contacts are provided by residues 10–17 (GRPNVGKS), 57–61 (DTGGI), 119–122 (NKVD), 182–189 (GRPNVGKS), 229–233 (DTAGM), and 294–297 (NKWD). Residues 352–436 (KRVQSSTLNE…PIHIIARKRN (85 aa)) form the KH-like domain.

This sequence belongs to the TRAFAC class TrmE-Era-EngA-EngB-Septin-like GTPase superfamily. EngA (Der) GTPase family. In terms of assembly, associates with the 50S ribosomal subunit.

Functionally, GTPase that plays an essential role in the late steps of ribosome biogenesis. This is GTPase Der from Staphylococcus aureus (strain USA300).